Reading from the N-terminus, the 316-residue chain is Pseudouridine-5'-phosphate glycosidase (316 aa).

Glu-31 functions as the Proton donor in the catalytic mechanism. Residues Lys-92 and Val-112 each coordinate substrate. Residue Asp-144 coordinates Mn(2+). A substrate-binding site is contributed by 146 to 148 (SAD). Lys-165 acts as the Nucleophile in catalysis.

The protein belongs to the pseudouridine-5'-phosphate glycosidase family. As to quaternary structure, homotrimer. The cofactor is Mn(2+).

The enzyme catalyses D-ribose 5-phosphate + uracil = psi-UMP + H2O. Functionally, catalyzes the reversible cleavage of pseudouridine 5'-phosphate (PsiMP) to ribose 5-phosphate and uracil. Functions biologically in the cleavage direction, as part of a pseudouridine degradation pathway. Part of an operon that could be involved in the biosynthesis of the blue pigment indigoidine, which is implicated in pathogenicity and protection from oxidative stress. In Dickeya dadantii (strain 3937) (Erwinia chrysanthemi (strain 3937)), this protein is Pseudouridine-5'-phosphate glycosidase.